The chain runs to 292 residues: ATP synthase gamma chain (292 aa).

It belongs to the ATPase gamma chain family. As to quaternary structure, F-type ATPases have 2 components, CF(1) - the catalytic core - and CF(0) - the membrane proton channel. CF(1) has five subunits: alpha(3), beta(3), gamma(1), delta(1), epsilon(1). CF(0) has three main subunits: a, b and c.

The protein localises to the cell inner membrane. Its function is as follows. Produces ATP from ADP in the presence of a proton gradient across the membrane. The gamma chain is believed to be important in regulating ATPase activity and the flow of protons through the CF(0) complex. The polypeptide is ATP synthase gamma chain (Brucella ovis (strain ATCC 25840 / 63/290 / NCTC 10512)).